The sequence spans 264 residues: Thymidylate synthase (264 aa).

Residues Arg-21 and 126–127 (RR) each bind dUMP. Cys-146 serves as the catalytic Nucleophile. DUMP is bound by residues 166–169 (RSAD), Asn-177, and 207–209 (HLY). Asp-169 is a (6R)-5,10-methylene-5,6,7,8-tetrahydrofolate binding site. Position 263 (Ala-263) interacts with (6R)-5,10-methylene-5,6,7,8-tetrahydrofolate.

The protein belongs to the thymidylate synthase family. Bacterial-type ThyA subfamily. Homodimer.

It is found in the cytoplasm. The enzyme catalyses dUMP + (6R)-5,10-methylene-5,6,7,8-tetrahydrofolate = 7,8-dihydrofolate + dTMP. It participates in pyrimidine metabolism; dTTP biosynthesis. Functionally, catalyzes the reductive methylation of 2'-deoxyuridine-5'-monophosphate (dUMP) to 2'-deoxythymidine-5'-monophosphate (dTMP) while utilizing 5,10-methylenetetrahydrofolate (mTHF) as the methyl donor and reductant in the reaction, yielding dihydrofolate (DHF) as a by-product. This enzymatic reaction provides an intracellular de novo source of dTMP, an essential precursor for DNA biosynthesis. This chain is Thymidylate synthase, found in Bradyrhizobium diazoefficiens (strain JCM 10833 / BCRC 13528 / IAM 13628 / NBRC 14792 / USDA 110).